The primary structure comprises 452 residues: Probable phosphoglucosamine mutase (452 aa).

The active-site Phosphoserine intermediate is the S101. The Mg(2+) site is built by S101, D242, D244, and D246. Residue S101 is modified to Phosphoserine.

Belongs to the phosphohexose mutase family. Requires Mg(2+) as cofactor. Post-translationally, activated by phosphorylation.

It carries out the reaction alpha-D-glucosamine 1-phosphate = D-glucosamine 6-phosphate. In terms of biological role, catalyzes the conversion of glucosamine-6-phosphate to glucosamine-1-phosphate. This is Probable phosphoglucosamine mutase from Methanosphaera stadtmanae (strain ATCC 43021 / DSM 3091 / JCM 11832 / MCB-3).